The following is a 104-amino-acid chain: Large ribosomal subunit protein bL21 (104 aa).

This sequence belongs to the bacterial ribosomal protein bL21 family. As to quaternary structure, part of the 50S ribosomal subunit. Contacts protein L20.

This protein binds to 23S rRNA in the presence of protein L20. This chain is Large ribosomal subunit protein bL21, found in Streptococcus thermophilus (strain ATCC BAA-491 / LMD-9).